Here is a 493-residue protein sequence, read N- to C-terminus: Acetylcholine receptor subunit beta (493 aa).

Residues 1–24 (MENVRRMALGLVVMMALALSGVGA) form the signal peptide. Residues 25–240 (SVMEDTLLSV…VTFYLIIQRK (216 aa)) are Extracellular-facing. Cys-152 and Cys-166 are disulfide-bonded. Asn-165 carries an N-linked (GlcNAc...) asparagine glycan. 3 helical membrane-spanning segments follow: residues 241–265 (PLFY…VFYL), 273–291 (MSLS…LLLA), and 307–328 (YLMF…VLNL). The Cytoplasmic segment spans residues 329-461 (HHRSPNTHTM…WQYVAMVADR (133 aa)). Phosphotyrosine; by Tyr-kinases is present on Tyr-379. The chain crosses the membrane as a helical span at residues 462–480 (LFLYVFFVICSIGTFSIFL).

It belongs to the ligand-gated ion channel (TC 1.A.9) family. Acetylcholine receptor (TC 1.A.9.1) subfamily. Beta-1/CHRNB1 sub-subfamily. As to quaternary structure, pentamer of two alpha chains, and one each of the beta, delta, and gamma chains.

It is found in the postsynaptic cell membrane. The protein resides in the cell membrane. It carries out the reaction K(+)(in) = K(+)(out). It catalyses the reaction Na(+)(in) = Na(+)(out). Its function is as follows. After binding acetylcholine, the AChR responds by an extensive change in conformation that affects all subunits and leads to opening of an ion-conducting channel across the plasma membrane. The protein is Acetylcholine receptor subunit beta (CHRNB1) of Tetronarce californica (Pacific electric ray).